Here is a 422-residue protein sequence, read N- to C-terminus: 3-phosphoshikimate 1-carboxyvinyltransferase (422 aa).

The 3-phosphoshikimate site is built by K20, S21, and R25. A phosphoenolpyruvate-binding site is contributed by K20. Residues G92 and R120 each contribute to the phosphoenolpyruvate site. Positions 163, 164, 165, 191, 304, and 331 each coordinate 3-phosphoshikimate. Phosphoenolpyruvate is bound at residue Q165. D304 acts as the Proton acceptor in catalysis. The phosphoenolpyruvate site is built by R335 and R377.

It belongs to the EPSP synthase family. In terms of assembly, monomer.

The protein resides in the cytoplasm. The catalysed reaction is 3-phosphoshikimate + phosphoenolpyruvate = 5-O-(1-carboxyvinyl)-3-phosphoshikimate + phosphate. Its pathway is metabolic intermediate biosynthesis; chorismate biosynthesis. In terms of biological role, catalyzes the transfer of the enolpyruvyl moiety of phosphoenolpyruvate (PEP) to the 5-hydroxyl of shikimate-3-phosphate (S3P) to produce enolpyruvyl shikimate-3-phosphate and inorganic phosphate. This Methanocorpusculum labreanum (strain ATCC 43576 / DSM 4855 / Z) protein is 3-phosphoshikimate 1-carboxyvinyltransferase.